We begin with the raw amino-acid sequence, 110 residues long: ATP-dependent Clp protease adapter protein ClpS (110 aa).

This sequence belongs to the ClpS family. Binds to the N-terminal domain of the chaperone ClpA.

Involved in the modulation of the specificity of the ClpAP-mediated ATP-dependent protein degradation. This chain is ATP-dependent Clp protease adapter protein ClpS, found in Bartonella henselae (strain ATCC 49882 / DSM 28221 / CCUG 30454 / Houston 1) (Rochalimaea henselae).